We begin with the raw amino-acid sequence, 669 residues long: MMTLRHLPFILLLILSGELYAEEKQCDFPTVENGRIAQYYYTFKSFYFPMSVDKKLSFFCLAGYATESGKQEEQIRCTAEGWSPNPRCYKKCLKPDLRNGYVSNDKVLYKLQERMSYGCSSGYKTTGGKDEEVVHCLSAGWSSQPSCRKEQETCLAPELEHGNYSTTQRTFKVKDIVAYTCTAGYYTTTGKQTGEAECQANGWSLTPQCNKLMCSSLRLIENGYFHPVKQTYEEGDVVQFFCHENYYLSGSDLIQCYNFGWYPESPICEGRRNRCPPPPVPLNSKIQPHSTTYRHGERVHIECELNFVIQGSEELLCENGKWTEPPKCIEEKEKVACEQPPSVENGVAHPHSEIYYSGDKVTYRCGGGYSLRGSSTITCNRGRWTLPPECVENIENCKPPPDIANGVVVDGLLASYTTGSSVEYRCNEYYLLKGSETSRCEQGAWSSPPVCLEPCTIDVDHMNRNNIQLKWKYEGKILHGDLIDFVCKQGYNLSPSIPLSEISAQCNRGDVRYPMCIRKESKGMCASPPVIRNGDIVSSAARTYENGSSVEYRCFDNHFLQGSQNVYCVDGVWTTPPSCLEPCTLSFVEMDKNYLQLKWNFDNRPLILHGEYIEFMCKRDAYISETSIAGSVLRVQCDRGRLKYPKCTPRDRRLSFQEALRTRRQMEKR.

Residues 1–21 form the signal peptide; sequence MMTLRHLPFILLLILSGELYA. 10 Sushi domains span residues 25-89, 90-149, 152-211, 212-270, 273-330, 335-392, 395-453, 454-517, 523-581, and 582-648; these read QCDF…PRCY, KKCL…SCRK, ETCL…QCNK, LMCS…ICEG, NRCP…KCIE, VACE…ECVE, ENCK…VCLE, PCTI…PMCI, GMCA…SCLE, and PCTL…PKCT. Cystine bridges form between Cys26/Cys77, Cys60/Cys88, Cys92/Cys136, Cys119/Cys147, Cys154/Cys198, Cys181/Cys209, Cys214/Cys256, Cys242/Cys268, Cys275/Cys317, Cys303/Cys328, Cys337/Cys379, Cys365/Cys390, Cys397/Cys440, Cys426/Cys451, Cys455/Cys506, Cys487/Cys516, Cys525/Cys568, Cys554/Cys579, Cys583/Cys637, and Cys617/Cys647. Asn163 is a glycosylation site (N-linked (GlcNAc...) asparagine). N-linked (GlcNAc...) asparagine glycosylation occurs at Asn546.

Tetramer of two A chains (F13A1) and two B (F13B) chains. In terms of tissue distribution, predominantly expressed in liver and kidney.

It localises to the secreted. Its function is as follows. The B chain of factor XIII is not catalytically active, but is thought to stabilize the A subunits and regulate the rate of transglutaminase formation by thrombin. The chain is Coagulation factor XIII B chain (F13b) from Mus musculus (Mouse).